Consider the following 307-residue polypeptide: Ribosomal RNA small subunit methyltransferase H (307 aa).

S-adenosyl-L-methionine-binding positions include glycine 34 to histidine 36, aspartate 53, leucine 88, aspartate 102, and glutamine 109.

The protein belongs to the methyltransferase superfamily. RsmH family.

Its subcellular location is the cytoplasm. The enzyme catalyses cytidine(1402) in 16S rRNA + S-adenosyl-L-methionine = N(4)-methylcytidine(1402) in 16S rRNA + S-adenosyl-L-homocysteine + H(+). In terms of biological role, specifically methylates the N4 position of cytidine in position 1402 (C1402) of 16S rRNA. The chain is Ribosomal RNA small subunit methyltransferase H from Sulfurimonas denitrificans (strain ATCC 33889 / DSM 1251) (Thiomicrospira denitrificans (strain ATCC 33889 / DSM 1251)).